The sequence spans 255 residues: MVLIRVLANLLILHLSYAQKSSELVIGGDECNINEHRFLALVYANGSLCGGTLINQEWVLTARHCDRGNMRIYLGMHNLKVLNKDALRRFPKEKYFCLNIRNDTIWDKDIMLIRLNRPVRNSAHIAPLSLPSNPPSVGSVCRVMGWGTITSPNATLPDVPHCANINILDYAVCQAAYRGLAATTLCSGILEGGKDTCKGDSGGPLICNGQFQGILSVGGNPCAQPRKPGVYTKVFDYTDWIQSIISGNTDAACPP.

A signal peptide spans 1 to 18 (MVLIRVLANLLILHLSYA). The propeptide occupies 19 to 24 (QKSSEL). Residues 25–246 (VIGGDECNIN…YTDWIQSIIS (222 aa)) form the Peptidase S1 domain. Disulfide bonds link Cys-31/Cys-162, Cys-49/Cys-65, Cys-97/Cys-253, Cys-141/Cys-207, Cys-173/Cys-186, and Cys-197/Cys-222. An N-linked (GlcNAc...) asparagine glycan is attached at Asn-45. His-64 serves as the catalytic Charge relay system. Residue Asn-102 is glycosylated (N-linked (GlcNAc...) asparagine). The Charge relay system role is filled by Asp-109. Asn-153 is a glycosylation site (N-linked (GlcNAc...) asparagine). The Charge relay system role is filled by Ser-201.

Belongs to the peptidase S1 family. Snake venom subfamily. In terms of assembly, monomer. Expressed by the venom gland.

It localises to the secreted. Functionally, snake venom serine protease that selectively cleaves the heavy chain of protein C (PROC). This activation is thrombomodulin-independent. The chain is Protein C activator from Agkistrodon piscivorus leucostoma (Western cottonmouth).